Reading from the N-terminus, the 249-residue chain is UDP-N-acetyl-D-mannosaminuronic acid transferase (249 aa).

It belongs to the glycosyltransferase 26 family.

It catalyses the reaction UDP-N-acetyl-alpha-D-mannosaminouronate + N-acetyl-alpha-D-glucosaminyl-di-trans,octa-cis-undecaprenyl diphosphate = beta-D-ManNAcA-(1-&gt;4)-alpha-D-GlcNAc-di-trans,octa-cis-undecaprenyl diphosphate + UDP + H(+). Its pathway is bacterial outer membrane biogenesis; enterobacterial common antigen biosynthesis. Its function is as follows. Catalyzes the synthesis of Und-PP-GlcNAc-ManNAcA (Lipid II), the second lipid-linked intermediate involved in enterobacterial common antigen (ECA) synthesis. The sequence is that of UDP-N-acetyl-D-mannosaminuronic acid transferase from Pectobacterium atrosepticum (strain SCRI 1043 / ATCC BAA-672) (Erwinia carotovora subsp. atroseptica).